Here is a 540-residue protein sequence, read N- to C-terminus: Berberine bridge enzyme-like 16 (540 aa).

The signal sequence occupies residues 1–24; that stretch reads MKFWSRPLTFLIIIIYLIIQQVNS. C38 and C101 are disulfide-bonded. Residue N59 is glycosylated (N-linked (GlcNAc...) asparagine). The 176-residue stretch at 79 to 254 folds into the FAD-binding PCMH-type domain; that stretch reads STRKPEVIVA…LAWKIKLVRV (176 aa). The segment at residues 116 to 178 is a cross-link (6-(S-cysteinyl)-8alpha-(pros-histidyl)-FAD (His-Cys)); the sequence is HDYEGFSYTS…KVHAFPAGVC (63 aa). N-linked (GlcNAc...) asparagine glycans are attached at residues N325 and N496.

The protein belongs to the oxygen-dependent FAD-linked oxidoreductase family. Requires FAD as cofactor. Post-translationally, the FAD cofactor is bound via a bicovalent 6-S-cysteinyl, 8alpha-N1-histidyl FAD linkage.

It localises to the secreted. The protein resides in the cell wall. The sequence is that of Berberine bridge enzyme-like 16 from Arabidopsis thaliana (Mouse-ear cress).